Consider the following 764-residue polypeptide: 1,4-alpha-glucan branching enzyme GlgB (764 aa).

Catalysis depends on D431, which acts as the Nucleophile. The active-site Proton donor is E484.

This sequence belongs to the glycosyl hydrolase 13 family. GlgB subfamily. Monomer.

The catalysed reaction is Transfers a segment of a (1-&gt;4)-alpha-D-glucan chain to a primary hydroxy group in a similar glucan chain.. It participates in glycan biosynthesis; glycogen biosynthesis. Its function is as follows. Catalyzes the formation of the alpha-1,6-glucosidic linkages in glycogen by scission of a 1,4-alpha-linked oligosaccharide from growing alpha-1,4-glucan chains and the subsequent attachment of the oligosaccharide to the alpha-1,6 position. The chain is 1,4-alpha-glucan branching enzyme GlgB from Synechococcus sp. (strain CC9902).